The following is a 558-amino-acid chain: Armadillo repeat-containing X-linked protein 5 (558 aa).

Composition is skewed to basic and acidic residues over residues 1-14 (MVDS…RGKA) and 139-156 (KSHD…REET). 2 disordered regions span residues 1-35 (MVDS…GKTQ) and 139-165 (KSHD…SSDE). An ARM 1 repeat occupies 300-339 (CKSRGFSLEPKEFDKLVALLKLTKDPFIHEIATMIMGISP). Positions 369–388 (HPGALSMVDDSSESSEEPKS) are disordered. 3 ARM repeats span residues 422–461 (IKFE…CLSK), 463–503 (HANT…NINF), and 520–558 (SELI…ILKL).

This sequence belongs to the eutherian X-chromosome-specific Armcx family.

The polypeptide is Armadillo repeat-containing X-linked protein 5 (ARMCX5) (Homo sapiens (Human)).